Consider the following 100-residue polypeptide: NAD(P)H-quinone oxidoreductase subunit 4L, chloroplastic (100 aa).

3 consecutive transmembrane segments (helical) span residues 1–21 (MLEH…YGLI), 31–51 (ICLE…SDFF), and 60–80 (IFAI…LAIL).

Belongs to the complex I subunit 4L family. In terms of assembly, NDH is composed of at least 16 different subunits, 5 of which are encoded in the nucleus.

It localises to the plastid. Its subcellular location is the chloroplast thylakoid membrane. It carries out the reaction a plastoquinone + NADH + (n+1) H(+)(in) = a plastoquinol + NAD(+) + n H(+)(out). The catalysed reaction is a plastoquinone + NADPH + (n+1) H(+)(in) = a plastoquinol + NADP(+) + n H(+)(out). Functionally, NDH shuttles electrons from NAD(P)H:plastoquinone, via FMN and iron-sulfur (Fe-S) centers, to quinones in the photosynthetic chain and possibly in a chloroplast respiratory chain. The immediate electron acceptor for the enzyme in this species is believed to be plastoquinone. Couples the redox reaction to proton translocation, and thus conserves the redox energy in a proton gradient. The polypeptide is NAD(P)H-quinone oxidoreductase subunit 4L, chloroplastic (Trachelium caeruleum (Blue throatwort)).